Reading from the N-terminus, the 396-residue chain is Elongation factor Tu (396 aa).

The tr-type G domain occupies 10–206 (KPHVNIGTIG…AVDNYIPEPE (197 aa)). Residues 19 to 26 (GHVDHGKT) form a G1 region. GTP is bound at residue 19-26 (GHVDHGKT). T26 serves as a coordination point for Mg(2+). The interval 60–64 (GITIA) is G2. The segment at 81–84 (DCPG) is G3. GTP contacts are provided by residues 81 to 85 (DCPGH) and 136 to 139 (NKAD). The tract at residues 136-139 (NKAD) is G4. The interval 174 to 176 (SAL) is G5.

It belongs to the TRAFAC class translation factor GTPase superfamily. Classic translation factor GTPase family. EF-Tu/EF-1A subfamily. In terms of assembly, monomer.

It is found in the cytoplasm. It catalyses the reaction GTP + H2O = GDP + phosphate + H(+). Functionally, GTP hydrolase that promotes the GTP-dependent binding of aminoacyl-tRNA to the A-site of ribosomes during protein biosynthesis. This Geobacter sulfurreducens (strain ATCC 51573 / DSM 12127 / PCA) protein is Elongation factor Tu.